A 526-amino-acid polypeptide reads, in one-letter code: MSTLFLIGIHEIEKSQTIVQNEHYFDRVIELQDLDSLMVALYKDRVSPFPNVHNFETGVSIVLYDPSKFQLSVRQLDVLFKRFFPSFNISAIDHTREENLQRLECVERENSICRNRITRINHWMYHHHDDTPDGINKNSYGTVNGNSVPTQACEANIYTLLLHLNDSKAQHLRKASVPRLIRNIEFMSFLSDPIEKISQEGSHYWNILSTWDFCALSLSTQELIWCGFTLIKKLSKDAKVLIADNKLLLLLFTLESSYHQVNKFHNFRHAIDVMQATWRLCTYLLKDNPVQTLLLCMAAIGHDVGHPGTNNQLLCNCESEVAQNFKNVSILENFHRELFQQLLSEHWPQLLSISKKKFDFISEAILATDMALHSQYEDRLMHENPMKQITLISLIIKAADISNVTRTLSISARWAYLITLEFNDCALLETFHKAHRPEQDCFGDSYKNVDSPKEDLESIQNILVNVTDPDDIIKDHPHIPNGQIFFINTFAEVFFNALSQKFSGLKFLSDNVKINKEYWMKHKKPQ.

One can recognise a PDEase domain in the interval 182–526; the sequence is RNIEFMSFLS…EYWMKHKKPQ (345 aa). Catalysis depends on His265, which acts as the Proton donor. A divalent metal cation-binding residues include His269, His302, Asp303, and Asp400.

The protein belongs to the cyclic nucleotide phosphodiesterase family. In terms of assembly, monomer. A divalent metal cation serves as cofactor.

It catalyses the reaction 3',5'-cyclic AMP + H2O = AMP + H(+). Its function is as follows. Controls the level of cAMP in yeast cells, together with the low-affinity cAMP phosphodiesterase (PDE1). This is 3',5'-cyclic-nucleotide phosphodiesterase 2 from Saccharomyces cerevisiae (strain ATCC 204508 / S288c) (Baker's yeast).